The primary structure comprises 645 residues: Rho GTPase-activating protein 25 (645 aa).

The 106-residue stretch at 46–151 (RPIKMGWLKK…WVKFLRRVAG (106 aa)) folds into the PH domain. Residues 159-353 (QRLDETVAYE…MMIRDHEVLF (195 aa)) form the Rho-GAP domain. 2 disordered regions span residues 355 to 444 (KSKD…QTLP) and 469 to 550 (FWSP…EEEI). Ser362 and Ser395 each carry phosphoserine. Residues 393 to 409 (TDSFSSMTSDSDTTSPT) are compositionally biased toward low complexity. Thr406 is subject to Phosphothreonine. Over residues 420–431 (DSSKVPREKPGD) the composition is skewed to basic and acidic residues. The segment covering 487–504 (SQDLRQLSDSQRTSTYDN) has biased composition (polar residues). A Phosphoserine modification is found at Ser536. A coiled-coil region spans residues 541-644 (GKKNSGEEEI…VKSMKEPKTE (104 aa)).

GTPase activator for the Rho-type GTPases by converting them to an inactive GDP-bound state. The protein is Rho GTPase-activating protein 25 (ARHGAP25) of Homo sapiens (Human).